Reading from the N-terminus, the 406-residue chain is Cysteine desulfurase IscS (406 aa).

Pyridoxal 5'-phosphate contacts are provided by residues 75-76 (AT), asparagine 155, glutamine 183, and 203-205 (SSH). Residue lysine 206 is modified to N6-(pyridoxal phosphate)lysine. Threonine 243 is a binding site for pyridoxal 5'-phosphate. Residue cysteine 330 is the Cysteine persulfide intermediate of the active site. [2Fe-2S] cluster is bound at residue cysteine 330.

The protein belongs to the class-V pyridoxal-phosphate-dependent aminotransferase family. NifS/IscS subfamily. Homodimer. Forms a heterotetramer with IscU, interacts with other sulfur acceptors. Requires pyridoxal 5'-phosphate as cofactor.

The protein resides in the cytoplasm. It catalyses the reaction (sulfur carrier)-H + L-cysteine = (sulfur carrier)-SH + L-alanine. The protein operates within cofactor biosynthesis; iron-sulfur cluster biosynthesis. In terms of biological role, master enzyme that delivers sulfur to a number of partners involved in Fe-S cluster assembly, tRNA modification or cofactor biosynthesis. Catalyzes the removal of elemental sulfur atoms from cysteine to produce alanine. Functions as a sulfur delivery protein for Fe-S cluster synthesis onto IscU, an Fe-S scaffold assembly protein, as well as other S acceptor proteins. The sequence is that of Cysteine desulfurase IscS from Glaesserella parasuis serovar 5 (strain SH0165) (Haemophilus parasuis).